The following is a 577-amino-acid chain: 2-succinyl-5-enolpyruvyl-6-hydroxy-3-cyclohexene-1-carboxylate synthase (577 aa).

Belongs to the TPP enzyme family. MenD subfamily. In terms of assembly, homodimer. Mg(2+) is required as a cofactor. Mn(2+) serves as cofactor. It depends on thiamine diphosphate as a cofactor.

The catalysed reaction is isochorismate + 2-oxoglutarate + H(+) = 5-enolpyruvoyl-6-hydroxy-2-succinyl-cyclohex-3-ene-1-carboxylate + CO2. It participates in quinol/quinone metabolism; 1,4-dihydroxy-2-naphthoate biosynthesis; 1,4-dihydroxy-2-naphthoate from chorismate: step 2/7. The protein operates within quinol/quinone metabolism; menaquinone biosynthesis. Catalyzes the thiamine diphosphate-dependent decarboxylation of 2-oxoglutarate and the subsequent addition of the resulting succinic semialdehyde-thiamine pyrophosphate anion to isochorismate to yield 2-succinyl-5-enolpyruvyl-6-hydroxy-3-cyclohexene-1-carboxylate (SEPHCHC). The chain is 2-succinyl-5-enolpyruvyl-6-hydroxy-3-cyclohexene-1-carboxylate synthase from Geobacillus kaustophilus (strain HTA426).